Here is a 356-residue protein sequence, read N- to C-terminus: Naringenin,2-oxoglutarate 3-dioxygenase (356 aa).

The region spanning 188–292 (CVDMDQKVVV…RLSIATFQNP (105 aa)) is the Fe2OG dioxygenase domain. Positions 215, 217, and 273 each coordinate Fe cation. Arg-283 contributes to the 2-oxoglutarate binding site.

The protein belongs to the iron/ascorbate-dependent oxidoreductase family. Requires Fe(2+) as cofactor. The cofactor is L-ascorbate.

The catalysed reaction is a (2S)-flavan-4-one + 2-oxoglutarate + O2 = a (2R,3R)-dihydroflavonol + succinate + CO2. It participates in secondary metabolite biosynthesis; flavonoid biosynthesis. In terms of biological role, catalyzes the 3-beta-hydroxylation of 2S-flavanones to 2R,3R-dihydroflavonols which are intermediates in the biosynthesis of flavonols, anthocyanidins, catechins and proanthocyanidins in plants. This is Naringenin,2-oxoglutarate 3-dioxygenase (FHT) from Callistephus chinensis (China aster).